The primary structure comprises 459 residues: WPP domain-interacting protein 3 (459 aa).

Over residues methionine 1–proline 17 the composition is skewed to polar residues. Residues methionine 1–valine 78 are disordered. The span at serine 52 to lysine 66 shows a compositional bias: basic residues. 2 consecutive short sequence motifs (nuclear localization signal) follow at residues lysine 60–lysine 61 and arginine 63–arginine 64. Basic and acidic residues predominate over residues arginine 67 to valine 78. A Nuclear localization signal 3 motif is present at residues lysine 86–arginine 87. Disordered stretches follow at residues lysine 240–histidine 266 and threonine 308–glycine 330. The span at asparagine 251–histidine 266 shows a compositional bias: basic and acidic residues. A compositionally biased stretch (polar residues) spans threonine 308–glutamine 319. Residues serine 331–cysteine 375 are a coiled coil. In terms of domain architecture, KASH spans lysine 426–threonine 459. Residues leucine 427–leucine 447 form a helical membrane-spanning segment.

As to quaternary structure, component of Ran complexes at least composed of WIT1 or WIT2, RANGAP1 or RANGAP2, and WIP1 or WIP2 or WIP3. Interacts with RANGAP1, WPP1/MAF1, and WPP2/MAF2. Interacts with SUN1 and SUN2. Core component of the LINC complex which is composed of inner nuclear membrane SUN domain-containing proteins coupled to outer nuclear membrane WIP and WIT proteins. The LINC complex also involves nucleoskeletal proteins CRWN/LINC and possibly KAKU4 and the cytoskeletal myosin KAKU1. Interacts with WIT2. In terms of tissue distribution, expressed in seedlings, roots, stems, leaves, and flowers.

It localises to the nucleus envelope. It is found in the nucleus membrane. In terms of biological role, mediates and enhances the nuclear envelope docking of RANGAP proteins mediated by WIT1 and WIT2 in the undifferentiated cells of root tips. As component of the SUN-WIP-WIT2-KAKU1 complex, mediates the transfer of cytoplasmic forces to the nuclear envelope (NE), leading to nuclear shape changes. The polypeptide is WPP domain-interacting protein 3 (WIP3) (Arabidopsis thaliana (Mouse-ear cress)).